Consider the following 420-residue polypeptide: MGMTITEKILAAHAGKASVEPGELIQAKLDLVLANDVTAPVSIKELEKASLDAVFDKERVVLVQDHFVPAKDIKSAEQSKIVRDFARKHDITHHYDVGDMGIEHCLLPEKGLVVPGDAVIGADSHTCTYGALGAFATGVGSTDLAAGIALGEAWFKVPEAIKFEYEGKLPEDVTGKDLILHTIGDIGVDGALYQSMEFTGSAIDDLSMDGRMTMCNMAIEAGGKNGIIAPDKKTIAYVEERATRPYKVYTSDPDAKYARVIKYDVEKLEPVVAFPHLPENTRPVSEAGHVEIDQVVIGSCTNGRIEDLRMAAKILQGKKVHKNVRCIIFPGTQAIYKQAIKEGLIDIFIDAGAAVSTPTCGPCLGGHMGILAKGERALATTNRNFVGRMGHPESEVYLCGPNVAAASAIAGRIVHPREVE.

Residues Cys-300, Cys-360, and Cys-363 each contribute to the [4Fe-4S] cluster site.

It belongs to the aconitase/IPM isomerase family. LeuC type 2 subfamily. As to quaternary structure, heterodimer of LeuC and LeuD. It depends on [4Fe-4S] cluster as a cofactor.

It catalyses the reaction (2R,3S)-3-isopropylmalate = (2S)-2-isopropylmalate. Its pathway is amino-acid biosynthesis; L-leucine biosynthesis; L-leucine from 3-methyl-2-oxobutanoate: step 2/4. Its function is as follows. Catalyzes the isomerization between 2-isopropylmalate and 3-isopropylmalate, via the formation of 2-isopropylmaleate. The polypeptide is 3-isopropylmalate dehydratase large subunit (Heliobacterium modesticaldum (strain ATCC 51547 / Ice1)).